A 258-amino-acid chain; its full sequence is Imidazole glycerol phosphate synthase subunit HisF (258 aa).

Catalysis depends on residues Asp-11 and Asp-130.

Belongs to the HisA/HisF family. As to quaternary structure, heterodimer of HisH and HisF.

The protein resides in the cytoplasm. The catalysed reaction is 5-[(5-phospho-1-deoxy-D-ribulos-1-ylimino)methylamino]-1-(5-phospho-beta-D-ribosyl)imidazole-4-carboxamide + L-glutamine = D-erythro-1-(imidazol-4-yl)glycerol 3-phosphate + 5-amino-1-(5-phospho-beta-D-ribosyl)imidazole-4-carboxamide + L-glutamate + H(+). Its pathway is amino-acid biosynthesis; L-histidine biosynthesis; L-histidine from 5-phospho-alpha-D-ribose 1-diphosphate: step 5/9. Its function is as follows. IGPS catalyzes the conversion of PRFAR and glutamine to IGP, AICAR and glutamate. The HisF subunit catalyzes the cyclization activity that produces IGP and AICAR from PRFAR using the ammonia provided by the HisH subunit. In Shigella dysenteriae serotype 1 (strain Sd197), this protein is Imidazole glycerol phosphate synthase subunit HisF.